The following is a 139-amino-acid chain: uncharacterized protein (139 aa).

In terms of domain architecture, VOC spans 9 to 133 (QAAQIRIARP…DGWRIVFMNS (125 aa)).

This is an uncharacterized protein from Bacillus subtilis (strain 168).